A 677-amino-acid polypeptide reads, in one-letter code: Pre-mRNA-splicing factor CLF1 (677 aa).

HAT repeat units lie at residues 52 to 84 (EYQGRKRKEFEDYVRRNRISMNNWMRYAQWELE), 86 to 118 (KEFRRARSVFERALDVDPTAVVLWIRYIEAEMK), 120 to 152 (RNINHARNLLDRAVTIYSRVDKLWYKYVYMEEM), 154 to 185 (GNIPGTRQVFERWMSWEPDEGAWGAYIKLEKR), 187 to 218 (NEFDRVRAIFERFTVVHPEPKNWIKWARFEEE), 220 to 255 (GTSDMVREVYGLAIETLGEDFMDEKLFIAYARYEAK), 257 to 291 (KEFERARAIYKYALDRLPRAKSVALHKAYTTFEKQ), 301 to 333 (VILSKRRVQYEEQIKENPKNYDIWFDFVRLEES), 335 to 369 (GDVERVRDVYERAIAQMPPSQEKRHWRRYIYLWIF), 379 to 415 (KDMERAHQIYQECIRLIPHKKFTFAKIWLMKAQFEIR), 417 to 448 (MDLQAARKTLGHAIGACPKDKLFKGYIDLERQ), 450 to 482 (FEFVRCRKLFEKQIEWSPSNCQAWIKFAELERG), 484 to 518 (DDIDRARAIYELGISQPVLDMPELLWKSYIDFEEY), 520 to 551 (GEYDRTRALYERLLEKTNHVKVWINFARFEIN), 570 to 608 (EAKRRARMVFERAHKVFKEKEMKEERVALLNAWKSFEQT), and 613 to 646 (DDIAKIERQMPSKVKKRRKLDDDRYEEYLDYMFP).

This sequence belongs to the crooked-neck family. Associated with the spliceosome.

The protein localises to the nucleus. Involved in pre-mRNA splicing and cell cycle progression. Required for the spliceosome assembly and initiation of the DNA replication. The sequence is that of Pre-mRNA-splicing factor CLF1 (CLF1) from Paracoccidioides brasiliensis.